The following is a 332-amino-acid chain: Glycerol-3-phosphate dehydrogenase [NAD(P)+] (332 aa).

NADPH contacts are provided by tryptophan 11, arginine 30, and lysine 108. Lysine 108, glycine 137, and serine 139 together coordinate sn-glycerol 3-phosphate. An NADPH-binding site is contributed by alanine 141. Sn-glycerol 3-phosphate is bound by residues lysine 192, aspartate 245, serine 255, arginine 256, and asparagine 257. The Proton acceptor role is filled by lysine 192. Position 256 (arginine 256) interacts with NADPH. NADPH-binding residues include valine 280 and glutamate 282.

It belongs to the NAD-dependent glycerol-3-phosphate dehydrogenase family.

It localises to the cytoplasm. It carries out the reaction sn-glycerol 3-phosphate + NAD(+) = dihydroxyacetone phosphate + NADH + H(+). The enzyme catalyses sn-glycerol 3-phosphate + NADP(+) = dihydroxyacetone phosphate + NADPH + H(+). It participates in membrane lipid metabolism; glycerophospholipid metabolism. In terms of biological role, catalyzes the reduction of the glycolytic intermediate dihydroxyacetone phosphate (DHAP) to sn-glycerol 3-phosphate (G3P), the key precursor for phospholipid synthesis. This chain is Glycerol-3-phosphate dehydrogenase [NAD(P)+], found in Burkholderia mallei (strain ATCC 23344).